A 442-amino-acid chain; its full sequence is UBX domain-containing protein 6 (442 aa).

The segment at 1–10 (MKKFFQEIKA) is mediates interaction with LMAN1. Positions 13–111 (KFKSAGPGQK…TNSVPEPKEE (99 aa)) are disordered. Ser36 bears the Phosphoserine mark. The VCP/p97-interacting motif (VIM) stretch occupies residues 51–63 (EAQMAAAAALARL). Over residues 52–61 (AQMAAAAALA) the composition is skewed to low complexity. The segment covering 90 to 105 (EATSSNNPGAPGTNSV) has biased composition (polar residues). The 70-residue stretch at 175–244 (VDTIAKYLDN…GQEEFYVLGE (70 aa)) folds into the PUB domain. The 77-residue stretch at 332 to 408 (RKYTYALVRV…GLVPSALLTF (77 aa)) folds into the UBX domain.

Interacts with VCP through the PUB domain (via C-terminus) and VIM motif (via N-terminus); the interaction is direct. Forms a ternary complex with CAV1 and VCP. Interacts with SYVN1. Interacts with HERPUD1. Interacts with VCPKMT. May interact with DERL1. Interacts with PLAA, VCP and YOD1; may form a complex involved in macroautophagy. Interacts with LMAN1. In terms of tissue distribution, widely expressed (at protein level). Highest expression in brain (at protein level).

It is found in the cytoplasm. The protein resides in the cytosol. The protein localises to the membrane. It localises to the nucleus. Its subcellular location is the cytoskeleton. It is found in the microtubule organizing center. The protein resides in the centrosome. The protein localises to the early endosome membrane. It localises to the late endosome membrane. Its subcellular location is the lysosome membrane. Functionally, may negatively regulate the ATPase activity of VCP, an ATP-driven segregase that associates with different cofactors to control a wide variety of cellular processes. As a cofactor of VCP, it may play a role in the transport of CAV1 to lysosomes for degradation. It may also play a role in endoplasmic reticulum-associated degradation (ERAD) of misfolded proteins. Together with VCP and other cofactors, it may play a role in macroautophagy, regulating for instance the clearance of damaged lysosomes. This Mus musculus (Mouse) protein is UBX domain-containing protein 6.